Consider the following 424-residue polypeptide: Enolase (424 aa).

Residue Gln-165 coordinates (2R)-2-phosphoglycerate. Glu-207 acts as the Proton donor in catalysis. Mg(2+) contacts are provided by Asp-244, Glu-283, and Asp-310. Positions 335, 364, 365, and 386 each coordinate (2R)-2-phosphoglycerate. Lys-335 acts as the Proton acceptor in catalysis.

Belongs to the enolase family. Requires Mg(2+) as cofactor.

The protein resides in the cytoplasm. The protein localises to the secreted. It is found in the cell surface. It catalyses the reaction (2R)-2-phosphoglycerate = phosphoenolpyruvate + H2O. Its pathway is carbohydrate degradation; glycolysis; pyruvate from D-glyceraldehyde 3-phosphate: step 4/5. Catalyzes the reversible conversion of 2-phosphoglycerate (2-PG) into phosphoenolpyruvate (PEP). It is essential for the degradation of carbohydrates via glycolysis. This chain is Enolase, found in Chlamydia caviae (strain ATCC VR-813 / DSM 19441 / 03DC25 / GPIC) (Chlamydophila caviae).